A 139-amino-acid polypeptide reads, in one-letter code: Histone H3 (139 aa).

Residues 1 to 48 (MARTKSTVIARKVTGGKAPRKQIGSKAARKSAAPSNTSGGVKKPHRYK) are disordered. Lys5 carries the N6,N6,N6-trimethyllysine; alternate modification. The residue at position 5 (Lys5) is an N6,N6-dimethyllysine; alternate. Residues Lys5 and Lys12 each carry the N6-methyllysine; alternate modification. 6 positions are modified to N6-acetyllysine; alternate: Lys12, Lys17, Lys21, Lys26, Lys30, and Lys42. Residue Lys17 is modified to N6,N6-dimethyllysine; alternate. N6-methyllysine; alternate occurs at positions 21, 26, 30, and 42. 2 positions are modified to N6,N6,N6-trimethyllysine; alternate: Lys30 and Lys42. Lys30 and Lys42 each carry N6,N6-dimethyllysine; alternate. N6-acetyllysine occurs at positions 62 and 70. The residue at position 85 (Lys85) is an N6,N6,N6-trimethyllysine; alternate. N6,N6-dimethyllysine; alternate is present on Lys85. An N6-methyllysine; alternate modification is found at Lys85.

Belongs to the histone H3 family. As to quaternary structure, the nucleosome is a histone octamer containing two molecules each of H2A, H2B, H3 and H4 assembled in one H3-H4 heterotetramer and two H2A-H2B heterodimers. The octamer wraps approximately 147 bp of DNA. Mono-, di- and trimethylated by the COMPASS complex to form H3K4me1/2/3. H3K4me activates gene expression by regulating transcription elongation and plays a role in telomere length maintenance. H3K4me enrichment correlates with transcription levels, and occurs in a 5' to 3' gradient with H3K4me3 enrichment at the 5'-end of genes, shifting to H3K4me2 and then H3K4me1. Methylated by SET2 to form H3K36me. H3K36me represses gene expression. Methylated by DOT1 to form H3K79me. H3K79me is required for association of SIR proteins with telomeric regions and for telomeric silencing. The COMPASS-mediated formation of H3K4me2/3 and the DOT1-mediated formation of H3K79me require H2BK123ub1. In terms of processing, acetylation of histone H3 leads to transcriptional activation. Acetylated by GCN5 to form H3K14ac. H3K14ac can also be formed by ESA1. H3K56ac formation occurs predominantly in newly synthesized H3 molecules during G1, S and G2/M of the cell cycle and may be involved in DNA repair.

It is found in the nucleus. The protein resides in the chromosome. Core component of nucleosome. Nucleosomes wrap and compact DNA into chromatin, limiting DNA accessibility to the cellular machineries which require DNA as a template. Histones thereby play a central role in transcription regulation, DNA repair, DNA replication and chromosomal stability. DNA accessibility is regulated via a complex set of post-translational modifications of histones, also called histone code, and nucleosome remodeling. This is Histone H3 (HHT1) from Yarrowia lipolytica (strain CLIB 122 / E 150) (Yeast).